The primary structure comprises 693 residues: Nitric oxide-associated protein 1 (693 aa).

A disordered region spans residues 43-67 (RASSLGRRVPPSSTATEDYAEGPDT). Tyr76 carries the post-translational modification Phosphotyrosine. Residues 203–504 (LELVSAALRR…FYDTPGITKE (302 aa)) form the CP-type G domain. The disordered stretch occupies residues 286-307 (GPQYPAGDEPLEEIKNQNPSSR).

This sequence belongs to the TRAFAC class YlqF/YawG GTPase family. NOA1 subfamily. Homodimer or multimer. Interacts with mitochondrial complex I, DAP3, MRPL12 and MRPS27. In terms of tissue distribution, expressed in tissues associated with high mitochondria content including testes, heart, liver, brain and thymus. Also expressed in various bone cell lines.

It is found in the mitochondrion inner membrane. In terms of biological role, involved in regulation of mitochondrial protein translation and respiration. Plays a role in mitochondria-mediated cell death. May act as a scaffolding protein or stabilizer of respiratory chain supercomplexes. Binds GTP. The sequence is that of Nitric oxide-associated protein 1 (Noa1) from Mus musculus (Mouse).